Reading from the N-terminus, the 439-residue chain is Forkhead box protein J1-A (439 aa).

Residues 124–218 constitute a DNA-binding region (fork-head); it reads KPPYSYATLI…INGAMKKRRL (95 aa). Residues 273–293 are disordered; that stretch reads EHGWNSISDGKSHKRKQPLPK. A compositionally biased stretch (basic residues) spans 284–293; that stretch reads SHKRKQPLPK.

This sequence belongs to the FOXJ1 family. Expressed in two independent areas of stage 10-11 embryos; in the dorsal blastopore lip (Spemann organizer) and shortly after in the ectodermal cells of the animal cap. As development proceeds, cells of the animal cap contribute to the epidermis and show a spotty pattern, which suggests expression in ciliated epidermal cells. Distribution of these cells is uniform in the trunk area of the embryo but more random in the head, being practically absent in the cement gland and olfactory placode. The spotted pattern becomes more dispersed as embryos grow in size. Due to cell movements during gastrulation, expression in the dorsal lip becomes located in the dorsal midline with expression restricted to the neuroectoderm. Expressed transiently in cells of the newly formed neural floor plate in the tail of older tadpoles.

The protein resides in the nucleus. Key transcription factor required for motile ciliogenesis. Activates genes essential for motile cilia formation and function. Required for ciliogenesis in multiciliated cells. This is Forkhead box protein J1-A (foxj1-a) from Xenopus laevis (African clawed frog).